The following is a 302-amino-acid chain: uncharacterized protein (302 aa).

Positions 1 to 52 (MLKKLKVVRLLVNHLIYCPSIFMPYSKNMKKKIWNKTSLGALFMLFGTALTA) are cleaved as a signal peptide.

The protein belongs to the MG439/MG440 family.

This is an uncharacterized protein from Mycoplasma pneumoniae (strain ATCC 29342 / M129 / Subtype 1) (Mycoplasmoides pneumoniae).